Here is a 131-residue protein sequence, read N- to C-terminus: Methylglyoxal synthase (131 aa).

In terms of domain architecture, MGS-like spans 1–131 (MKIALIAHDK…GDLDYRKLRK (131 aa)). Residues histidine 8, lysine 12, 34-37 (TGTT), and 54-55 (SG) each bind substrate. Aspartate 60 functions as the Proton donor/acceptor in the catalytic mechanism. Histidine 87 serves as a coordination point for substrate.

The protein belongs to the methylglyoxal synthase family.

The catalysed reaction is dihydroxyacetone phosphate = methylglyoxal + phosphate. Its function is as follows. Catalyzes the formation of methylglyoxal from dihydroxyacetone phosphate. In Bacillus cereus (strain ATCC 14579 / DSM 31 / CCUG 7414 / JCM 2152 / NBRC 15305 / NCIMB 9373 / NCTC 2599 / NRRL B-3711), this protein is Methylglyoxal synthase.